A 131-amino-acid chain; its full sequence is Small ribosomal subunit protein bS6 (131 aa).

It belongs to the bacterial ribosomal protein bS6 family.

Binds together with bS18 to 16S ribosomal RNA. The sequence is that of Small ribosomal subunit protein bS6 from Borrelia hermsii (strain HS1 / DAH).